The primary structure comprises 451 residues: Phosphoglucosamine mutase (451 aa).

Ser102 acts as the Phosphoserine intermediate in catalysis. Ser102, Asp243, Asp245, and Asp247 together coordinate Mg(2+). A Phosphoserine modification is found at Ser102.

Belongs to the phosphohexose mutase family. It depends on Mg(2+) as a cofactor. In terms of processing, activated by phosphorylation.

It carries out the reaction alpha-D-glucosamine 1-phosphate = D-glucosamine 6-phosphate. Its function is as follows. Catalyzes the conversion of glucosamine-6-phosphate to glucosamine-1-phosphate. The polypeptide is Phosphoglucosamine mutase (Brucella abortus (strain 2308)).